Consider the following 142-residue polypeptide: Small ribosomal subunit protein bS6 (142 aa).

Positions 110 to 133 are enriched in basic and acidic residues; the sequence is NKKPSHAKEKHEKTEHTHSHHAEE. Residues 110-142 are disordered; that stretch reads NKKPSHAKEKHEKTEHTHSHHAEEAESVGSHSE.

Belongs to the bacterial ribosomal protein bS6 family.

Its function is as follows. Binds together with bS18 to 16S ribosomal RNA. In Helicobacter pylori (strain P12), this protein is Small ribosomal subunit protein bS6.